The primary structure comprises 250 residues: Triosephosphate isomerase (250 aa).

Residue N9–K11 coordinates substrate. H96 serves as the catalytic Electrophile. E168 serves as the catalytic Proton acceptor. Residues G174, S216, and G237–G238 contribute to the substrate site.

It belongs to the triosephosphate isomerase family. As to quaternary structure, homodimer.

It is found in the cytoplasm. The catalysed reaction is D-glyceraldehyde 3-phosphate = dihydroxyacetone phosphate. It participates in carbohydrate biosynthesis; gluconeogenesis. The protein operates within carbohydrate degradation; glycolysis; D-glyceraldehyde 3-phosphate from glycerone phosphate: step 1/1. Its function is as follows. Involved in the gluconeogenesis. Catalyzes stereospecifically the conversion of dihydroxyacetone phosphate (DHAP) to D-glyceraldehyde-3-phosphate (G3P). This is Triosephosphate isomerase from Leptospira interrogans serogroup Icterohaemorrhagiae serovar copenhageni (strain Fiocruz L1-130).